A 677-amino-acid polypeptide reads, in one-letter code: Bargin (677 aa).

2 stretches are compositionally biased toward low complexity: residues Met1–Val13 and Ala29–Gln39. Disordered stretches follow at residues Met1–Gln39 and Ser168–Thr190. One can recognise a BAR domain in the interval Glu25–Ser270. 3 positions are modified to phosphoserine: Ser183, Ser270, and Ser272. In terms of domain architecture, Rho-GAP spans Val284–Phe477. A disordered region spans residues Ser504–Leu577. Residues Ala516 to Ala530 show a composition bias toward pro residues. Phosphoserine is present on residues Ser552 and Ser558. Residues Thr574–Asp677 are mediates non-covalent binding of poly-ubiquitin chains.

As to expression, expressed in brain (at protein level).

The protein resides in the cell membrane. The protein localises to the cytoplasm. It localises to the cytosol. GTPase activating protein (GAP) which specifically converts GTP-bound RAC1 and CDC42 in their inactive GDP-bound form. The GAP activity is enhanced by the non-covalent binding of K-29 and K-48 polyubiquitin chains. In Homo sapiens (Human), this protein is Bargin.